Reading from the N-terminus, the 608-residue chain is MATENGAVELGIQSLSTDEASKGAASEESLAAEKDPAPPDPEKGPGPSDTKQDPDPSTPKKDANTPAPEKGDVVPAQPSAGGSQGPAGEGGQVEAPAEGSAGKPAALPQQTATAEASEKKPEAEKGPSGHQDPGEPTVGKKVAEGQAAARRGSPAFLHSPSCPAIIASTEKLPAQKPLSEASELIFEGVPATPGPTEPGPAKAEGGVDLLAESQKEAGEKAPGQADQAKVQGDTSRGIEFQAVPSERPRPEVGQALCLPAREEDCFQILDDCPPPPAPFPHRIVELRTGNVSSEFSMNSKEALGGGKFGAVCTCTEKSTGLKLAAKVIKKQTPKDKEMVMLEIEVMNQLNHRNLIQLYAAIETPHEIVLFMEYIEGGELFERIVDEDYHLTEVDTMVFVRQICDGILFMHKMRVLHLDLKPENILCVNTTGHLVKIIDFGLARRYNPNEKLKVNFGTPEFLSPEVVNYDQISDKTDMWSLGVITYMLLSGLSPFLGDDDTETLNNVLSGNWYFDEETFEAVSDEAKDFVSNLIVKEQGARMSAAQCLAHPWLNNLAEKAKRCNRRLKSQILLKKYLMKRRWKKNFIAVSAANRFKKISSSGALMALGV.

A disordered region spans residues 1 to 160; sequence MATENGAVEL…RGSPAFLHSP (160 aa). An N-acetylalanine modification is found at alanine 2. 2 stretches are compositionally biased toward basic and acidic residues: residues 31 to 43 and 50 to 63; these read AAEKDPAPPDPEK and TKQDPDPSTPKKDA. Gly residues predominate over residues 82-91; it reads GSQGPAGEGG. The span at 116 to 127 shows a compositional bias: basic and acidic residues; the sequence is ASEKKPEAEKGP. Serine 153, serine 159, and serine 161 each carry phosphoserine. The segment at 214–235 is disordered; that stretch reads QKEAGEKAPGQADQAKVQGDTS. Residues 297-552 form the Protein kinase domain; that stretch reads MNSKEALGGG…AAQCLAHPWL (256 aa). Residues 303-311 and lysine 326 each bind ATP; that span reads LGGGKFGAV. The active-site Proton acceptor is aspartate 418. Position 457 is a phosphothreonine (threonine 457). The tract at residues 586–598 is calmodulin-binding; the sequence is IAVSAANRFKKIS.

This sequence belongs to the protein kinase superfamily. CAMK Ser/Thr protein kinase family. In terms of assembly, may interact with centrin.

The protein resides in the cytoplasm. It catalyses the reaction L-seryl-[myosin light chain] + ATP = O-phospho-L-seryl-[myosin light chain] + ADP + H(+). The catalysed reaction is L-threonyl-[myosin light chain] + ATP = O-phospho-L-threonyl-[myosin light chain] + ADP + H(+). In terms of biological role, implicated in the level of global muscle contraction and cardiac function. Phosphorylates a specific serine in the N-terminus of a myosin light chain. The protein is Myosin light chain kinase 2, skeletal/cardiac muscle (MYLK2) of Oryctolagus cuniculus (Rabbit).